Here is a 255-residue protein sequence, read N- to C-terminus: UPF0246 protein BVU_0413 (255 aa).

The protein belongs to the UPF0246 family.

In Phocaeicola vulgatus (strain ATCC 8482 / DSM 1447 / JCM 5826 / CCUG 4940 / NBRC 14291 / NCTC 11154) (Bacteroides vulgatus), this protein is UPF0246 protein BVU_0413.